Reading from the N-terminus, the 454-residue chain is Gustatory and odorant receptor 21a (454 aa).

Residues 1 to 114 (MTFLDRTMSF…LPRTGYSWGS (114 aa)) lie on the Cytoplasmic side of the membrane. The chain crosses the membrane as a helical span at residues 115–135 (KQVMWAIFIYSCQTTIVVLVL). The Extracellular segment spans residues 136 to 153 (RERVKKFVTSPDKRFDEA). A helical transmembrane segment spans residues 154 to 174 (IYNVIFISLLFTNFLLPVASW). The Cytoplasmic portion of the chain corresponds to 175 to 206 (RHGPQVAIFKNMWTNYQYKFFKTTGSPIVFPN). The chain crosses the membrane as a helical span at residues 207–227 (LYPLTWSLCVFSWLLSIAINL). Residues 228–237 (SQYFLQPDFR) are Extracellular-facing. A helical membrane pass occupies residues 238–258 (LWYTFAYYPIIAMLNCFCSLW). Residues 259 to 312 (YINCNAFGTASRALSDALQTTIRGEKPAQKLTEYRHLWVDLSHMMQQLGRAYSN) lie on the Cytoplasmic side of the membrane. A helical membrane pass occupies residues 313–333 (MYGMYCLVIFFTTIIATYGSI). The Extracellular portion of the chain corresponds to 334 to 345 (SEIIDHGATYKE). Residues 346–366 (VGLFVIVFYCMGLLYIICNEA) traverse the membrane as a helical segment. Residues 367 to 422 (HYASRKVGLDFQTKLLNINLTAVDAATQKEVEMLLVAINKNPPIMNLDGYANINRE) are Cytoplasmic-facing. Residues 423–443 (LITTNISFMATYLVVLLQFKI) traverse the membrane as a helical segment. The Extracellular portion of the chain corresponds to 444 to 454 (TEQRRIGQQQA).

This sequence belongs to the insect chemoreceptor superfamily. Gustatory receptor (GR) family. Gr21a subfamily. In terms of assembly, gr21a and Gr63a probably form a heterodimer that responds to CO(2). As to expression, expressed in the adult labellar chemosensory neurons. Carbon dioxide-responsive neurons coexpress Gr21a and Gr63a in a pair of chemosensory receptors at both larval and adult life stages. A single bilateral neuron, expressing the Gr21a receptor, is responsible for CO(2) detection in larvae.

Its subcellular location is the cell membrane. Its function is as follows. Gustatory and odorant receptor which mediates acceptance or avoidance behavior, depending on its substrates. Gr21a and Gr63a together are sufficient for carbon dioxide detection and avoidance behavior. It is possible that the CO(2) receptors Gr63a and Gr21a activate the TRPC channels through Galpha49B and Plc21C. This innate olfactory avoidance behavior can be inhibited by inhibitory interactions of the odors such as 1-hexanol and 2,3-butanedione with Gr21a and Gr63a. This is Gustatory and odorant receptor 21a (Gr21a) from Drosophila melanogaster (Fruit fly).